The sequence spans 468 residues: Immunoglobulin superfamily member 21 (468 aa).

The first 24 residues, 1 to 24, serve as a signal peptide directing secretion; sequence MQAAPSLRRASCLLLAAILDLARG. An Ig-like 1 domain is found at 25 to 132; the sequence is YLTVNIEPLP…RATREKVVLA (108 aa). A disulfide bridge connects residues Cys-46 and Cys-116. N-linked (GlcNAc...) asparagine glycosylation is found at Asn-82, Asn-165, and Asn-407. Residues 344–429 enclose the Ig-like 2 domain; it reads PKIMMTPSRA…GSTDTHTRLI (86 aa).

As to quaternary structure, interacts (Ig-like 1 domain) with NRXN2 (via Laminin G-like 1 domain) in a trans-interaction manner. As to expression, expressed in brain (at protein levels). Highly expressed in the pyramidal cell layer of the dorsal and ventral hippocampal CA1 and CA3 regions, layers 5 and 6 of the cortex, the thalamus and the pons and weakly expressed in the cerebellum. Expressed in neurons but not in glia.

Its subcellular location is the postsynaptic cell membrane. In terms of biological role, involved in synaptic inhibition in the brain. Selectively regulates inhibitory presynaptic differentiation through interacting with presynaptic NRXN2. This Mus musculus (Mouse) protein is Immunoglobulin superfamily member 21 (Igsf21).